A 344-amino-acid polypeptide reads, in one-letter code: MNSITLLQPDDWHAHLRDGLALKRTVPDLAKQFARAICMPNLVPPVKTVEEALAYRERILAHVPEGNNFDPRMVLYFTDHTSPDEVRKIKESEHVNAIKLYPAGATTNSDNGVSDIRKVYAVIEQLEEHQVPLLLHGEVTHNHVDIFDREKRFLDEVLSPLLKQFPKLKVVLEHITTSDAAHFVLEQDRNVAATITPQHLLFNRNDMLVGGIKPHFYCLPILKRQTHQTTLLEVATSGNPKFFLGTDSAPHAQNAKENACGCAGCYSAPNAIELYAQAFDQVGKLERLEGFASHFGADFYGLPRNTSTITLVKEDNLVPESFDYLDNQKIIPLHAGKTLQWRKV.

Zn(2+) contacts are provided by H13 and H15. Substrate is bound by residues 15–17 (HLR) and N41. The Zn(2+) site is built by K99, H136, and H174. K99 is subject to N6-carboxylysine. H136 lines the substrate pocket. A substrate-binding site is contributed by L219. Position 247 (D247) interacts with Zn(2+). Residue D247 is part of the active site. Substrate-binding residues include H251 and A263.

It belongs to the metallo-dependent hydrolases superfamily. DHOase family. Class II DHOase subfamily. In terms of assembly, homodimer. Zn(2+) serves as cofactor.

The catalysed reaction is (S)-dihydroorotate + H2O = N-carbamoyl-L-aspartate + H(+). It functions in the pathway pyrimidine metabolism; UMP biosynthesis via de novo pathway; (S)-dihydroorotate from bicarbonate: step 3/3. Functionally, catalyzes the reversible cyclization of carbamoyl aspartate to dihydroorotate. The polypeptide is Dihydroorotase (Acinetobacter baumannii (strain AB307-0294)).